Reading from the N-terminus, the 301-residue chain is Ribosomal protein L11 methyltransferase (301 aa).

Residues threonine 147, glycine 168, aspartate 190, and asparagine 237 each contribute to the S-adenosyl-L-methionine site.

This sequence belongs to the methyltransferase superfamily. PrmA family.

It is found in the cytoplasm. The catalysed reaction is L-lysyl-[protein] + 3 S-adenosyl-L-methionine = N(6),N(6),N(6)-trimethyl-L-lysyl-[protein] + 3 S-adenosyl-L-homocysteine + 3 H(+). In terms of biological role, methylates ribosomal protein L11. The sequence is that of Ribosomal protein L11 methyltransferase from Synechococcus sp. (strain RCC307).